The primary structure comprises 284 residues: Bifunctional protein FolD (284 aa).

NADP(+) is bound by residues 166–168, S191, and I232; that span reads GAS.

Belongs to the tetrahydrofolate dehydrogenase/cyclohydrolase family. In terms of assembly, homodimer.

It carries out the reaction (6R)-5,10-methylene-5,6,7,8-tetrahydrofolate + NADP(+) = (6R)-5,10-methenyltetrahydrofolate + NADPH. The enzyme catalyses (6R)-5,10-methenyltetrahydrofolate + H2O = (6R)-10-formyltetrahydrofolate + H(+). It participates in one-carbon metabolism; tetrahydrofolate interconversion. Functionally, catalyzes the oxidation of 5,10-methylenetetrahydrofolate to 5,10-methenyltetrahydrofolate and then the hydrolysis of 5,10-methenyltetrahydrofolate to 10-formyltetrahydrofolate. This chain is Bifunctional protein FolD, found in Neisseria meningitidis serogroup C (strain 053442).